The sequence spans 179 residues: Peptidyl-prolyl cis-trans isomerase H (179 aa).

Residues 16 to 178 enclose the PPIase cyclophilin-type domain; that stretch reads FFDISIGDTP…LQVRIAECGE (163 aa).

The protein belongs to the cyclophilin-type PPIase family. PPIase H subfamily.

It is found in the nucleus. The enzyme catalyses [protein]-peptidylproline (omega=180) = [protein]-peptidylproline (omega=0). PPIases accelerate the folding of proteins. It catalyzes the cis-trans isomerization of proline imidic peptide bonds in oligopeptides. The chain is Peptidyl-prolyl cis-trans isomerase H (CYP3) from Cryptococcus neoformans var. neoformans serotype D (strain B-3501A) (Filobasidiella neoformans).